Reading from the N-terminus, the 258-residue chain is L-aminoadipate-semialdehyde dehydrogenase-phosphopantetheinyl transferase (258 aa).

This sequence belongs to the P-Pant transferase superfamily. AcpS family.

Its subcellular location is the cytoplasm. The protein resides in the nucleus. It catalyses the reaction apo-[ACP] + CoA = holo-[ACP] + adenosine 3',5'-bisphosphate + H(+). In terms of biological role, catalyzes the transfer of a 4'-phosphopantetheine moiety from coenzyme A to a serine residue of acceptor proteins, such as alpha-aminoadipate reductase. Necessary for alpha-aminoadipate reductase activity. This is L-aminoadipate-semialdehyde dehydrogenase-phosphopantetheinyl transferase (lys7) from Schizosaccharomyces pombe (strain 972 / ATCC 24843) (Fission yeast).